Here is a 401-residue protein sequence, read N- to C-terminus: Glycerol-1-phosphate dehydrogenase [NAD(P)+] (401 aa).

NAD(+)-binding positions include D57, 118–122 (GTIHD), and 140–143 (TAPS). D145 lines the substrate pocket. S149 provides a ligand contact to NAD(+). D192 serves as a coordination point for substrate. D192 and H272 together coordinate Ni(2+). Position 276 (H276) interacts with substrate. Residue H292 coordinates Ni(2+).

This sequence belongs to the glycerol-1-phosphate dehydrogenase family. As to quaternary structure, homodimer. Requires Ni(2+) as cofactor.

The protein resides in the cytoplasm. It catalyses the reaction sn-glycerol 1-phosphate + NAD(+) = dihydroxyacetone phosphate + NADH + H(+). It carries out the reaction sn-glycerol 1-phosphate + NADP(+) = dihydroxyacetone phosphate + NADPH + H(+). Functionally, catalyzes the NAD(P)H-dependent reduction of dihydroxyacetonephosphate (DHAP or glycerone phosphate) to glycerol 1-phosphate (G1P). The G1P thus generated is probably used for the synthesis of phosphoglycerolipids in Gram-positive bacterial species. This chain is Glycerol-1-phosphate dehydrogenase [NAD(P)+], found in Bacillus licheniformis (strain ATCC 14580 / DSM 13 / JCM 2505 / CCUG 7422 / NBRC 12200 / NCIMB 9375 / NCTC 10341 / NRRL NRS-1264 / Gibson 46).